We begin with the raw amino-acid sequence, 190 residues long: Putative triphosphatase YjbK (190 aa).

The region spanning 4–189 (EIEIEFKNML…LRFYEEKRKS (186 aa)) is the CYTH domain.

The sequence is that of Putative triphosphatase YjbK (yjbK) from Bacillus subtilis (strain 168).